The primary structure comprises 611 residues: Leucine aminopeptidase 2 (611 aa).

Residues 135–137 (QCQ) and 265–270 (PYGGME) each bind a peptide. His-294 serves as a coordination point for Zn(2+). Residue Glu-295 is the Proton acceptor of the active site. Zn(2+)-binding residues include His-298 and Glu-317. Tyr-383 acts as the Proton donor in catalysis.

Belongs to the peptidase M1 family. Requires Zn(2+) as cofactor.

The protein resides in the cytoplasm. It is found in the nucleus. It carries out the reaction an epoxide + H2O = an ethanediol. Functionally, aminopeptidase that preferentially cleaves di- and tripeptides. Also has low epoxide hydrolase activity (in vitro). Can hydrolyze the epoxide leukotriene LTA(4) but it forms preferentially 5,6-dihydroxy-7,9,11,14-eicosatetraenoic acid rather than the cytokine leukotriene B(4) as the product compared to the homologous mammalian enzyme (in vitro). The protein is Leucine aminopeptidase 2 of Chaetomium globosum (strain ATCC 6205 / CBS 148.51 / DSM 1962 / NBRC 6347 / NRRL 1970) (Soil fungus).